The following is a 357-amino-acid chain: Hemolysin VllY (357 aa).

VOC domains are found at residues 12–132 (GFEF…FVDR) and 162–313 (EIDH…IFTQ). Positions 165, 243, and 322 each coordinate Fe cation.

This sequence belongs to the 4HPPD family. It depends on Fe cation as a cofactor.

In Vibrio vulnificus (strain CMCP6), this protein is Hemolysin VllY (vllY).